The chain runs to 1145 residues: Cation channel sperm-associated auxiliary subunit gamma 2 (1145 aa).

Positions 1-38 are cleaved as a signal peptide; sequence MVSRPAMSPVSPVWPRKPNLWAFWVLRLVLLLSLKSWA. Residues 39 to 1061 are Extracellular-facing; that stretch reads EDALQHCTWL…IHGLPLSSKR (1023 aa). Cystine bridges form between C45–C106 and C160–C166. The N-linked (GlcNAc...) asparagine glycan is linked to N103. Residue N178 is glycosylated (N-linked (GlcNAc...) asparagine). An intrachain disulfide couples C289 to C344. Residues N356, N402, N672, and N743 are each glycosylated (N-linked (GlcNAc...) asparagine). Disulfide bonds link C395/C403, C634/C856, C802/C830, C878/C1042, C905/C914, and C1006/C1012. N1038 carries an N-linked (GlcNAc...) asparagine glycan. Residues 1062-1083 traverse the membrane as a helical segment; sequence TSFIVMVSTSFFIALVVFYILF. At 1084-1145 the chain is on the cytoplasmic side; the sequence is CLVWPHIVKA…KEDNVQAKTA (62 aa).

It belongs to the CATSPERG family. As to quaternary structure, component of the CatSper complex or CatSpermasome composed of the core pore-forming members CATSPER1, CATSPER2, CATSPER3 and CATSPER4 as well as auxiliary members CATSPERB, CATSPERG2, CATSPERD, CATSPERE, CATSPERZ, C2CD6/CATSPERT, SLCO6C1, TMEM249, TMEM262 and EFCAB9. HSPA1 may be an additional auxiliary complex member. The core complex members CATSPER1, CATSPER2, CATSPER3 and CATSPER4 form a heterotetrameric channel. The auxiliary CATSPERB, CATSPERG2, CATSPERD and CATSPERE subunits form a pavilion-like structure over the pore which stabilizes the complex through interactions with CATSPER4, CATSPER3, CATSPER1 and CATSPER2 respectively. SLCO6C1 interacts with CATSPERE and TMEM262/CATSPERH interacts with CATSPERB, further stabilizing the complex. C2CD6/CATSPERT interacts at least with CATSPERD and is required for targeting the CatSper complex in the flagellar membrane. Testis-specific. Specifically expressed in the principal piece of the sperm tail (at protein level). Expressed in spermatocytes and spermatids within the seminiferous tubule but not in interstitial cells.

It localises to the cell projection. Its subcellular location is the cilium. The protein localises to the flagellum membrane. Functionally, auxiliary component of the CatSper complex, a complex involved in sperm cell hyperactivation. Sperm cell hyperactivation is needed for sperm motility which is essential late in the preparation of sperm for fertilization. This chain is Cation channel sperm-associated auxiliary subunit gamma 2, found in Mus musculus (Mouse).